The chain runs to 51 residues: Lantibiotic lacticin-481 (51 aa).

Positions 1–24 (MKEQNSFNLLQEVTESELDLILGA) are excised as a propeptide. Positions 33-38 (TISHEC) form a cross-link, beta-methyllanthionine (Thr-Cys). Cross-links (lanthionine (Ser-Cys)) lie at residues 35–49 (SHEC…VFTC) and 42–50 (SWQFVFTCC). (Z)-2,3-didehydrobutyrine is present on Thr-48.

The protein belongs to the type A lantibiotic family. As to quaternary structure, monomer or homodimer. In terms of processing, maturation of lantibiotics involves the enzymatic conversion of Thr, and Ser into dehydrated AA and the formation of thioether bonds with cysteine. This is followed by membrane translocation and cleavage of the modified precursor. It is established that the 2,3-didehydrobutyrine is the Z-isomer.

Lanthionine-containing peptide antibiotic (lantibiotic) active on Gram-positive bacteria. The bactericidal activity of lantibiotics is based on depolarization of energized bacterial cytoplasmic membranes, initiated by the formation of aqueous transmembrane pores. Lacticin 481 is a broad spectrum bacteriocin exhibiting activity against a wide range of lactic acid bacteria and C.tyrobutyricum. The protein is Lantibiotic lacticin-481 (lctA) of Lactococcus lactis subsp. lactis (Streptococcus lactis).